Here is a 272-residue protein sequence, read N- to C-terminus: Glutamate racemase (272 aa).

Substrate contacts are provided by residues 16 to 17 and 48 to 49; these read DS and YG. The Proton donor/acceptor role is filled by C79. Substrate is bound at residue 80-81; it reads NT. C191 acts as the Proton donor/acceptor in catalysis. A substrate-binding site is contributed by 192–193; sequence TH.

This sequence belongs to the aspartate/glutamate racemases family.

It catalyses the reaction L-glutamate = D-glutamate. It participates in cell wall biogenesis; peptidoglycan biosynthesis. Functionally, provides the (R)-glutamate required for cell wall biosynthesis. In Chlorobaculum tepidum (strain ATCC 49652 / DSM 12025 / NBRC 103806 / TLS) (Chlorobium tepidum), this protein is Glutamate racemase.